Consider the following 576-residue polypeptide: Eukaryotic translation initiation factor 2A (576 aa).

WD repeat units follow at residues 71-119 (LPAA…LVFS), 266-307 (DREG…VSII), 308-349 (PPAP…KKIT), and 351-396 (VEAA…MFYE). 2 disordered regions span residues 422–461 (SASLPSPPTPHASASKLAAKPSVKPAGAYRPPGARGQNST) and 475–505 (GSANKHVNSSRQRVVPGATPVIDGNKKNNKK). Positions 475–486 (GSANKHVNSSRQ) are enriched in polar residues.

The protein belongs to the WD repeat EIF2A family.

The protein resides in the cytoplasm. Its function is as follows. Functions in the early steps of protein synthesis of a small number of specific mRNAs. Acts by directing the binding of methionyl-tRNAi to 40S ribosomal subunits. In contrast to the eIF-2 complex, it binds methionyl-tRNAi to 40S subunits in a codon-dependent manner, whereas the eIF-2 complex binds methionyl-tRNAi to 40S subunits in a GTP-dependent manner. The chain is Eukaryotic translation initiation factor 2A from Schizosaccharomyces pombe (strain 972 / ATCC 24843) (Fission yeast).